Here is a 385-residue protein sequence, read N- to C-terminus: Elongation factor Ts, mitochondrial (385 aa).

A mitochondrion-targeting transit peptide spans 1–50 (MAWSQSARKPMIGLLFRAQQHGARGYSYSAFQAHLSSSNVDQSATLLRRF).

Belongs to the EF-Ts family.

Its subcellular location is the mitochondrion. Functionally, associates with the EF-Tu.GDP complex and induces the exchange of GDP to GTP. It remains bound to the aminoacyl-tRNA.EF-Tu.GTP complex up to the GTP hydrolysis stage on the ribosome. The protein is Elongation factor Ts, mitochondrial of Oryza sativa subsp. indica (Rice).